Consider the following 352-residue polypeptide: UDP-N-acetylglucosamine--N-acetylmuramyl-(pentapeptide) pyrophosphoryl-undecaprenol N-acetylglucosamine transferase 2 (352 aa).

Residues 11 to 13, R164, S194, and Q289 each bind UDP-N-acetyl-alpha-D-glucosamine; that span reads SAG.

The protein belongs to the glycosyltransferase 28 family. MurG subfamily.

Its subcellular location is the cell membrane. The enzyme catalyses di-trans,octa-cis-undecaprenyl diphospho-N-acetyl-alpha-D-muramoyl-L-alanyl-D-glutamyl-meso-2,6-diaminopimeloyl-D-alanyl-D-alanine + UDP-N-acetyl-alpha-D-glucosamine = di-trans,octa-cis-undecaprenyl diphospho-[N-acetyl-alpha-D-glucosaminyl-(1-&gt;4)]-N-acetyl-alpha-D-muramoyl-L-alanyl-D-glutamyl-meso-2,6-diaminopimeloyl-D-alanyl-D-alanine + UDP + H(+). Its pathway is cell wall biogenesis; peptidoglycan biosynthesis. Cell wall formation. Catalyzes the transfer of a GlcNAc subunit on undecaprenyl-pyrophosphoryl-MurNAc-pentapeptide (lipid intermediate I) to form undecaprenyl-pyrophosphoryl-MurNAc-(pentapeptide)GlcNAc (lipid intermediate II). This is UDP-N-acetylglucosamine--N-acetylmuramyl-(pentapeptide) pyrophosphoryl-undecaprenol N-acetylglucosamine transferase 2 from Bacillus cereus (strain ATCC 10987 / NRS 248).